Reading from the N-terminus, the 153-residue chain is Glucose-6-phosphate 1-dehydrogenase (153 aa).

NADP(+)-binding residues include arginine 21 and lysine 120. Residue lysine 120 participates in D-glucose 6-phosphate binding.

It belongs to the glucose-6-phosphate dehydrogenase family.

The protein localises to the cytoplasm. It is found in the cytosol. It catalyses the reaction D-glucose 6-phosphate + NADP(+) = 6-phospho-D-glucono-1,5-lactone + NADPH + H(+). The protein operates within carbohydrate degradation; pentose phosphate pathway; D-ribulose 5-phosphate from D-glucose 6-phosphate (oxidative stage): step 1/3. In terms of biological role, cytosolic glucose-6-phosphate dehydrogenase that catalyzes the first and rate-limiting step of the oxidative branch within the pentose phosphate pathway/shunt, an alternative route to glycolysis for the dissimilation of carbohydrates and a major source of reducing power and metabolic intermediates for fatty acid and nucleic acid biosynthetic processes. The chain is Glucose-6-phosphate 1-dehydrogenase (ZW) from Culex pipiens (House mosquito).